The primary structure comprises 120 residues: Large ribosomal subunit protein uL18 (120 aa).

The protein belongs to the universal ribosomal protein uL18 family. As to quaternary structure, part of the 50S ribosomal subunit; part of the 5S rRNA/L5/L18 subcomplex. In B.stearothermophilus only 2 proteins, L5 and L18 have been shown to be part of this subcomplex, unlike the case in E.coli and T.thermophilus where L25 (TL5) is also found. In terms of processing, the protein, when overexpressed in E.coli, contains a phosphoserine, which is required for the protein to bind to 5S rRNA. It has been suggested, based solely on amino acid conservation, that this occurs on Ser-57.

Functionally, this is one of the proteins that bind and probably mediate the attachment of the 5S RNA into the large ribosomal subunit, where it forms part of the central protuberance. The chain is Large ribosomal subunit protein uL18 (rplR) from Geobacillus stearothermophilus (Bacillus stearothermophilus).